A 304-amino-acid chain; its full sequence is DCN1-like protein 3 (304 aa).

Disordered regions lie at residues 1 to 87 (MGQC…EESS) and 284 to 304 (EVEG…EEQT). Glycine 2 carries the N-myristoyl glycine lipid modification. The DCUN1 domain maps to 86–278 (SSLQRLEELF…LFDTFVEWEM (193 aa)).

In terms of assembly, part of a complex containing DCUN1D3, CUL3 and RBX1. Interacts (via the DCUN1 domain) with the unneddylated cullins: interacts with CUL1, CUL2, CUL3, CUL4A, CUL4B and CUL5; these interactions promote the cullin neddylation and the identity of the cullin dictates the affinity of the interaction. Interacts preferentially with CUL3; this interaction triggers the relocalization of CUL3 to the cell membrane where CUL3 is neddylated. Interacts (via DCUN1 domain) with RBX1. May also interact with regulators or subunits of cullin-RING ligases such as RNF7, ELOB and DDB1; these interactions are bridged by cullins. Interacts (via DCUN1 domain) with CAND1; this interaction is bridged by cullins and strongly inhibits cullin neddylation. These CAND-cullin-DCNL complexes can only be neddylated in the presence of a substrate adapter. Interacts (via DCUN1 domain) with the N-terminally acetylated form of UBE2M and UBE2F. Highest levels of expression are in the testis. Very low levels of expression in the heart, brain, skeletal muscle, kidney, liver, spleen, lung and ovary.

Its subcellular location is the cell membrane. It localises to the cytoplasm. It is found in the nucleus. The protein resides in the perinuclear region. In terms of biological role, contributes to the neddylation of all cullins by transferring NEDD8 from N-terminally acetylated NEDD8-conjugating E2s enzyme to different cullin C-terminal domain-RBX complexes and may play a role in the cell cycle progression by regulating the SCF ubiquitin E3 ligase complex, after UV damage. At the cell membrane, can promote and as well inhibit cullins neddylation. This chain is DCN1-like protein 3, found in Mus musculus (Mouse).